The primary structure comprises 229 residues: Peroxiredoxin-like 2A (229 aa).

The segment at 14–112 is thioredoxin fold; sequence MWSIGVGAFG…DELGVPLYAV (99 aa). Residues Cys85 and Cys88 each act as redox-active in the active site.

The protein belongs to the peroxiredoxin-like PRXL2 family. PRXL2A subfamily. In terms of tissue distribution, expressed by the principal cells of the epididymis. Detected in the head region of epididymal sperm (at protein level). Expressed in bone marrow.

The protein resides in the cytoplasm. The protein localises to the secreted. Its function is as follows. Involved in redox regulation of the cell. Acts as an antioxidant. Inhibits TNFSF11-induced NFKB1 and JUN activation and osteoclast differentiation. May affect bone resorption and help to maintain bone mass. Acts as a negative regulator of macrophage-mediated inflammation by inhibiting macrophage production of inflammatory cytokines, probably through suppression of the MAPK signaling pathway. This Rattus norvegicus (Rat) protein is Peroxiredoxin-like 2A.